The chain runs to 471 residues: 5-hydroxytryptamine receptor 2A (471 aa).

The Extracellular segment spans residues 1-80 (MEILCEDNIS…LQEKNWSALL (80 aa)). Residues N8, N38, N44, N51, and N54 are each glycosylated (N-linked (GlcNAc...) asparagine). The chain crosses the membrane as a helical span at residues 81-97 (TTVVIILTIAGNILVIM). Residues 98–111 (AVSLEKKLQNATNY) lie on the Cytoplasmic side of the membrane. Residues 112–137 (FLMSLAIADMLLGFLVMPVSMLTILY) form a helical membrane-spanning segment. Residues 138 to 146 (GYRWPLPSK) lie on the Extracellular side of the membrane. A helical membrane pass occupies residues 147 to 171 (LCAVWIYLDVLFSTASIMHLCAISL). C148 and C227 are joined by a disulfide. D155 is a serotonin binding site. A DRY motif; important for ligand-induced conformation changes motif is present at residues 172-174 (DRY). Residues 172–191 (DRYVAIQNPIHHSRFNSRTK) are Cytoplasmic-facing. The chain crosses the membrane as a helical span at residues 192–215 (AFLKIIAVWTISVGISMPIPVFGL). Residues 216–232 (QDDSKVFKEGSCLLADD) are Extracellular-facing. Residues 233–258 (NFVLIGSFVAFFIPLTIMVITYFLTI) traverse the membrane as a helical segment. The Cytoplasmic segment spans residues 259-322 (KSLQKEATLC…QSISNEQKAC (64 aa)). S280 is subject to Phosphoserine. Residues 323–348 (KVLGIVFFLFVVMWCPFFITNIMAVI) form a helical membrane-spanning segment. N343 provides a ligand contact to serotonin. C349 and C353 are disulfide-bonded. At 349–356 (CKESCNEN) the chain is on the extracellular side. Residues 357 to 382 (VIGALLNVFVWIGYLSSAVNPLVYTL) traverse the membrane as a helical segment. An NPxxY motif; important for ligand-induced conformation changes and signaling motif is present at residues 376-380 (NPLVY). At 383 to 471 (FNKTYRSAFS…ETVNEKVSCV (89 aa)) the chain is on the cytoplasmic side. A PDZ-binding motif is present at residues 469–471 (SCV).

This sequence belongs to the G-protein coupled receptor 1 family. In terms of assembly, interacts (via C-terminus) with MPDZ and PATJ. May interact (via C-terminus) with MPP3, PRDX6, DLG4, DLG1, CASK, APBA1 and MAGI2. Interacts with GRM2 and DRD2; this may affect signaling. Detected in neurons in brain cortex. Detected in adult intestine, especially in mucosal epithelium, longitudinal and circular layers of muscularis externa and myenteric plexuses. Highly expressed in Paneth cells, and detected at lower levels in enterocytes (at protein level). Detected in neurons in the brain cortex.

Its subcellular location is the cell membrane. It is found in the cell projection. It localises to the dendrite. The protein localises to the axon. The protein resides in the cytoplasmic vesicle. Its subcellular location is the membrane. It is found in the caveola. It localises to the presynapse. With respect to regulation, G-protein coupled receptor activity is regulated by lipids: oleamide increases HTR2A-mediated activity. Functionally, G-protein coupled receptor for 5-hydroxytryptamine (serotonin). Also functions as a receptor for various drugs and psychoactive substances, including mescaline, psilocybin, 1-(2,5-dimethoxy-4-iodophenyl)-2-aminopropane (DOI) and lysergic acid diethylamide (LSD). Ligand binding causes a conformation change that triggers signaling via guanine nucleotide-binding proteins (G proteins) and modulates the activity of downstream effectors. HTR2A is coupled to G(q)/G(11) G alpha proteins and activates phospholipase C-beta, releasing diacylglycerol (DAG) and inositol 1,4,5-trisphosphate (IP3) second messengers that modulate the activity of phosphatidylinositol 3-kinase and promote the release of Ca(2+) ions from intracellular stores, respectively. Beta-arrestin family members inhibit signaling via G proteins and mediate activation of alternative signaling pathways. Affects neural activity, perception, cognition and mood. Plays a role in the regulation of behavior, including responses to anxiogenic situations and psychoactive substances. Plays a role in intestinal smooth muscle contraction, and may play a role in arterial vasoconstriction. In Mus musculus (Mouse), this protein is 5-hydroxytryptamine receptor 2A (Htr2a).